Here is a 278-residue protein sequence, read N- to C-terminus: Adenosylcobinamide-GDP ribazoletransferase (278 aa).

6 helical membrane-spanning segments follow: residues 44–64, 69–89, 121–141, 161–181, 204–224, and 227–247; these read GIGVVVGGAAAAMFALLQLLL, FTPLVAAAFSTVATVWLTGGF, AFGAMALVLALLCKVALLALL, VCAALWTGHIVSRGLPLVMIW, GGLAIAFSWCFGALALASLAL, and INLIVACGFSVLALLGLLRFF.

Belongs to the CobS family. Mg(2+) is required as a cofactor.

The protein localises to the cell inner membrane. The catalysed reaction is alpha-ribazole + adenosylcob(III)inamide-GDP = adenosylcob(III)alamin + GMP + H(+). The enzyme catalyses alpha-ribazole 5'-phosphate + adenosylcob(III)inamide-GDP = adenosylcob(III)alamin 5'-phosphate + GMP + H(+). It functions in the pathway cofactor biosynthesis; adenosylcobalamin biosynthesis; adenosylcobalamin from cob(II)yrinate a,c-diamide: step 7/7. Its function is as follows. Joins adenosylcobinamide-GDP and alpha-ribazole to generate adenosylcobalamin (Ado-cobalamin). Also synthesizes adenosylcobalamin 5'-phosphate from adenosylcobinamide-GDP and alpha-ribazole 5'-phosphate. The chain is Adenosylcobinamide-GDP ribazoletransferase from Polaromonas naphthalenivorans (strain CJ2).